A 152-amino-acid chain; its full sequence is Transcriptional repressor NrdR (152 aa).

A zinc finger spans residues cysteine 3–cysteine 34. The ATP-cone domain maps to proline 49–glutamate 139.

The protein belongs to the NrdR family. Requires Zn(2+) as cofactor.

In terms of biological role, negatively regulates transcription of bacterial ribonucleotide reductase nrd genes and operons by binding to NrdR-boxes. The polypeptide is Transcriptional repressor NrdR (Actinobacillus succinogenes (strain ATCC 55618 / DSM 22257 / CCUG 43843 / 130Z)).